The primary structure comprises 206 residues: Pyrrolidone-carboxylate peptidase (206 aa).

Residues glutamate 76, cysteine 139, and histidine 163 contribute to the active site.

The protein belongs to the peptidase C15 family. In terms of assembly, homotetramer.

The protein localises to the cytoplasm. The enzyme catalyses Release of an N-terminal pyroglutamyl group from a polypeptide, the second amino acid generally not being Pro.. Its function is as follows. Removes 5-oxoproline from various penultimate amino acid residues except L-proline. This chain is Pyrrolidone-carboxylate peptidase (pcp), found in Pyrococcus horikoshii (strain ATCC 700860 / DSM 12428 / JCM 9974 / NBRC 100139 / OT-3).